A 384-amino-acid polypeptide reads, in one-letter code: 1-deoxy-D-xylulose 5-phosphate reductoisomerase (384 aa).

NADPH-binding residues include Thr-10, Gly-11, Ser-12, Ile-13, Gly-36, and Asn-122. Residue Lys-123 participates in 1-deoxy-D-xylulose 5-phosphate binding. Position 124 (Glu-124) interacts with NADPH. Mn(2+) is bound at residue Asp-148. Ser-149, Glu-150, Ser-174, and His-197 together coordinate 1-deoxy-D-xylulose 5-phosphate. Glu-150 serves as a coordination point for Mn(2+). Gly-203 contacts NADPH. Residues Ser-210, Asn-215, Lys-216, and Glu-219 each contribute to the 1-deoxy-D-xylulose 5-phosphate site. Residue Glu-219 participates in Mn(2+) binding.

The protein belongs to the DXR family. The cofactor is Mg(2+). It depends on Mn(2+) as a cofactor.

It carries out the reaction 2-C-methyl-D-erythritol 4-phosphate + NADP(+) = 1-deoxy-D-xylulose 5-phosphate + NADPH + H(+). It participates in isoprenoid biosynthesis; isopentenyl diphosphate biosynthesis via DXP pathway; isopentenyl diphosphate from 1-deoxy-D-xylulose 5-phosphate: step 1/6. Catalyzes the NADPH-dependent rearrangement and reduction of 1-deoxy-D-xylulose-5-phosphate (DXP) to 2-C-methyl-D-erythritol 4-phosphate (MEP). This chain is 1-deoxy-D-xylulose 5-phosphate reductoisomerase, found in Chlorobium phaeobacteroides (strain DSM 266 / SMG 266 / 2430).